The sequence spans 300 residues: Merozoite surface protein 2 (300 aa).

A signal peptide spans 1–20 (MKVIKTLSIINFFIFVTFNI). N-linked (GlcNAc...) asparagine glycans are attached at residues asparagine 22 and asparagine 36. The tract at residues 44-226 (EESKPPTGAV…EQTESPELQS (183 aa)) is polymorphic region. The stretch at 51-58 (GAVAGSGA) is one 1; inverted repeat. The interval 51–74 (GAVAGSGAGAGSGAGAVAGSGAGA) is 7 X 8 AA tandem repeats of G-S-G-A-G-A-V-A. Repeat copies occupy residues 61-68 (GSGAGAVA), 69-76 (GSGAGAVA), 77-84 (GSGAGAVA), 85-92 (GSGAGAVA), and 93-100 (GSGAGAVA). One copy of the 7; inverted repeat lies at 103-110 (GAVAGSGA). The interval 111 to 261 (GNGANPGADA…DSQKECTDGN (151 aa)) is disordered. The segment covering 124–148 (PSTPATTTTTTTTNDAEASTSTSSE) has biased composition (low complexity). Over residues 149-165 (NRNHNNAETNPKGKGEV) the composition is skewed to basic and acidic residues. Polar residues-rich tracts occupy residues 167–193 (KPNQANKETQNNSNVQQDSQTKSNVPR) and 200–228 (KSPTAQPEQAENSAPTAEQTESPELQSAP). Asparagine 177 is a glycosylation site (N-linked (GlcNAc...) asparagine). The N-linked (GlcNAc...) asparagine glycan is linked to asparagine 249. Cysteines 257 and 265 form a disulfide. N-linked (GlcNAc...) asparagine glycans are attached at residues asparagine 273 and asparagine 274. Residue asparagine 274 is the site of GPI-anchor amidated asparagine attachment. Residues 275–300 (SSNIASINKFVVLISATLVLSFAIFI) constitute a propeptide, removed in mature form.

It is found in the cell membrane. Its function is as follows. May play a role in the merozoite attachment to the erythrocyte. This chain is Merozoite surface protein 2, found in Plasmodium falciparum (isolate mad71 / Papua New Guinea).